Here is a 2458-residue protein sequence, read N- to C-terminus: Highly reducing polyketide synthase alnA (2458 aa).

The 426-residue stretch at 48–473 (TMPIAIVGMA…GANAHVILDD (426 aa)) folds into the Ketosynthase family 3 (KS3) domain. Catalysis depends on for beta-ketoacyl synthase activity residues Cys-221, His-356, and His-396. Residues 488–515 (HTTLSESEDSSDSGLEMDSSTSDSGEGQ) form a disordered region. The span at 499 to 515 (DSGLEMDSSTSDSGEGQ) shows a compositional bias: low complexity. Positions 609–932 (VFTGQGAQWP…PYMSVLSRGK (324 aa)) are malonyl-CoA:ACP transacylase (MAT) domain. Ser-697 functions as the For malonyltransferase activity in the catalytic mechanism. The N-terminal hotdog fold stretch occupies residues 1000–1130 (NDLLGVPVAQ…GSFSLHYEDA (131 aa)). The region spanning 1000–1307 (NDLLGVPVAQ…VTEVSAGAST (308 aa)) is the PKS/mFAS DH domain. Positions 1001 to 1305 (DLLGVPVAQQ…MTVTEVSAGA (305 aa)) are dehydratase (DH) domain. The Proton acceptor; for dehydratase activity role is filled by His-1032. A C-terminal hotdog fold region spans residues 1148–1307 (TRACRKLDVE…VTEVSAGAST (160 aa)). Asp-1218 serves as the catalytic Proton donor; for dehydratase activity. Positions 1740–2051 (GSPSQARWVP…GQQQHERVAA (312 aa)) are enoylreductase (ER) domain. Positions 2076–2264 (KPDATYILAG…VTDASHFNEN (189 aa)) are ketoreductase (KR) domain. The region spanning 2359–2441 (STTVAQAHEV…RLALKIVSKS (83 aa)) is the Carrier domain. Ser-2401 carries the O-(pantetheine 4'-phosphoryl)serine modification.

It functions in the pathway polyketide biosynthesis. Functionally, highly reducing polyketide synthase; part of the gene cluster that mediates the biosynthesis of asperlin, a polyketide showing anti-inflammatory, antitumor and antibiotic activities. The first step of the asperlin biosynthesis is the production of the intermediate 2,4,6-octatrienoic acid by the highly redusing polyketide synthase alnA with cleavage of the PKS product by the esterase alnB. 2,4,6-octatrienoic acid is further converted to asperlin via several steps involving the remaining enzymes from the cluster. The sequence is that of Highly reducing polyketide synthase alnA from Emericella nidulans (strain FGSC A4 / ATCC 38163 / CBS 112.46 / NRRL 194 / M139) (Aspergillus nidulans).